A 105-amino-acid polypeptide reads, in one-letter code: Large ribosomal subunit protein eL30 (105 aa).

The protein belongs to the eukaryotic ribosomal protein eL30 family.

The chain is Large ribosomal subunit protein eL30 (RPL30) from Eremothecium gossypii (strain ATCC 10895 / CBS 109.51 / FGSC 9923 / NRRL Y-1056) (Yeast).